Consider the following 414-residue polypeptide: Ornithine aminotransferase (414 aa).

Cys-154 and Cys-163 are oxidised to a cystine. Lys-262 is modified (N6-(pyridoxal phosphate)lysine).

Belongs to the class-III pyridoxal-phosphate-dependent aminotransferase family. In terms of assembly, homodimer. It depends on pyridoxal 5'-phosphate as a cofactor. In terms of processing, the disulfide bond between Cys-154 and Cys-163 is reduced by TRX1 which increases OAT catalytic activity.

It localises to the cytoplasm. The catalysed reaction is a 2-oxocarboxylate + L-ornithine = L-glutamate 5-semialdehyde + an L-alpha-amino acid. It catalyses the reaction L-ornithine + 2-oxoglutarate = L-glutamate 5-semialdehyde + L-glutamate. It functions in the pathway amino-acid biosynthesis; L-proline biosynthesis; L-glutamate 5-semialdehyde from L-ornithine: step 1/1. Unlike for mammalian OATs, activity is increased by TRX1-mediated reduction of the disulfide bond between Cys-154 and Cys-163. Binding to TRX1 may also induce conformational changes that facilitate substrate binding. Its function is as follows. Catalyzes the transamination of alpha-ketoglutarate with ornithine or N-acetylornithine and of glutamate-5-semialdehyde with glutamate and alanine. The polypeptide is Ornithine aminotransferase (Plasmodium yoelii yoelii).